The following is a 289-amino-acid chain: ATP synthase gamma chain (289 aa).

The protein belongs to the ATPase gamma chain family. As to quaternary structure, F-type ATPases have 2 components, CF(1) - the catalytic core - and CF(0) - the membrane proton channel. CF(1) has five subunits: alpha(3), beta(3), gamma(1), delta(1), epsilon(1). CF(0) has three main subunits: a, b and c.

Its subcellular location is the cell inner membrane. In terms of biological role, produces ATP from ADP in the presence of a proton gradient across the membrane. The gamma chain is believed to be important in regulating ATPase activity and the flow of protons through the CF(0) complex. This chain is ATP synthase gamma chain, found in Acinetobacter baumannii (strain AB307-0294).